Consider the following 58-residue polypeptide: Putative calcium channel toxin 196 (58 aa).

An N-terminal signal peptide occupies residues 1 to 16 (GSLLLVLFLLSVICYA). A propeptide spanning residues 17 to 26 (EIAAGPTKCQ) is cleaved from the precursor. 3 disulfide bridges follow: Cys-25-Cys-38, Cys-31-Cys-43, and Cys-37-Cys-52.

Belongs to the scorpion calcin-like family. KTX subfamily. As to expression, expressed by the venom gland.

The protein localises to the secreted. Its function is as follows. May inhibit voltage-gated potassium channels Kv1.1/KCNA1, hKv1.2/KCNA2, and Kv1.3/KCNA3. May also increase intracellular calcium release through the activation of nuclear inositol 1,4,5-trisphosphate receptors (ITPR) of cardiomyocytes, thereby causing an increase in the contraction frequency of these cells. This Lychas mucronatus (Chinese swimming scorpion) protein is Putative calcium channel toxin 196.